We begin with the raw amino-acid sequence, 721 residues long: Ribonuclease R (721 aa).

One can recognise an RNB domain in the interval 249–587 (RRSIIDREII…VHRLLWMFIF (339 aa)). The region spanning 639-719 (GKEFIGVVTT…LTRKIDFELV (81 aa)) is the S1 motif domain.

It belongs to the RNR ribonuclease family. RNase R subfamily.

Its subcellular location is the cytoplasm. The enzyme catalyses Exonucleolytic cleavage in the 3'- to 5'-direction to yield nucleoside 5'-phosphates.. In terms of biological role, 3'-5' exoribonuclease that releases 5'-nucleoside monophosphates and is involved in maturation of structured RNAs. This is Ribonuclease R from Ureaplasma parvum serovar 3 (strain ATCC 700970).